A 415-amino-acid polypeptide reads, in one-letter code: Serine hydroxymethyltransferase (415 aa).

Residues Leu121 and 125–127 each bind (6S)-5,6,7,8-tetrahydrofolate; that span reads GHL. Position 230 is an N6-(pyridoxal phosphate)lysine (Lys230). 355–357 contributes to the (6S)-5,6,7,8-tetrahydrofolate binding site; sequence SPF.

It belongs to the SHMT family. Homodimer. The cofactor is pyridoxal 5'-phosphate.

It is found in the cytoplasm. The catalysed reaction is (6R)-5,10-methylene-5,6,7,8-tetrahydrofolate + glycine + H2O = (6S)-5,6,7,8-tetrahydrofolate + L-serine. The protein operates within one-carbon metabolism; tetrahydrofolate interconversion. Its pathway is amino-acid biosynthesis; glycine biosynthesis; glycine from L-serine: step 1/1. Its function is as follows. Catalyzes the reversible interconversion of serine and glycine with tetrahydrofolate (THF) serving as the one-carbon carrier. This reaction serves as the major source of one-carbon groups required for the biosynthesis of purines, thymidylate, methionine, and other important biomolecules. Also exhibits THF-independent aldolase activity toward beta-hydroxyamino acids, producing glycine and aldehydes, via a retro-aldol mechanism. The polypeptide is Serine hydroxymethyltransferase (Lactococcus lactis subsp. lactis (strain IL1403) (Streptococcus lactis)).